Consider the following 193-residue polypeptide: Phosphoheptose isomerase (193 aa).

An SIS domain is found at 37–193 (LADSFKAGGK…QLIEKEMVKA (157 aa)). 52–54 (NGG) is a binding site for substrate. Positions 61 and 65 each coordinate Zn(2+). Residues E65, 93-94 (ND), 119-121 (STS), S124, and Q172 each bind substrate. Zn(2+)-binding residues include Q172 and H180.

Belongs to the SIS family. GmhA subfamily. In terms of assembly, homotetramer. Zn(2+) is required as a cofactor.

It localises to the cytoplasm. It carries out the reaction 2 D-sedoheptulose 7-phosphate = D-glycero-alpha-D-manno-heptose 7-phosphate + D-glycero-beta-D-manno-heptose 7-phosphate. It functions in the pathway carbohydrate biosynthesis; D-glycero-D-manno-heptose 7-phosphate biosynthesis; D-glycero-alpha-D-manno-heptose 7-phosphate and D-glycero-beta-D-manno-heptose 7-phosphate from sedoheptulose 7-phosphate: step 1/1. Its function is as follows. Catalyzes the isomerization of sedoheptulose 7-phosphate in D-glycero-D-manno-heptose 7-phosphate. This Serratia proteamaculans (strain 568) protein is Phosphoheptose isomerase.